Consider the following 72-residue polypeptide: Protein RALF-like 11 (72 aa).

A signal peptide spans 1–17 (MKAWLICLLVICAAVIA). 2 disulfides stabilise this stretch: Cys-34-Cys-43 and Cys-63-Cys-69.

This sequence belongs to the plant rapid alkalinization factor (RALF) family.

The protein localises to the secreted. Functionally, cell signaling peptide that may regulate plant stress, growth, and development. Mediates a rapid alkalinization of extracellular space by mediating a transient increase in the cytoplasmic Ca(2+) concentration leading to a calcium-dependent signaling events through a cell surface receptor and a concomitant activation of some intracellular mitogen-activated protein kinases. The sequence is that of Protein RALF-like 11 (RALFL11) from Arabidopsis thaliana (Mouse-ear cress).